The chain runs to 887 residues: Alanine--tRNA ligase (887 aa).

Positions 564, 568, 675, and 679 each coordinate Zn(2+). A compositionally biased stretch (gly residues) spans 851–866 (GQGGGGRPDMAQGGGP). The segment at 851–871 (GQGGGGRPDMAQGGGPDGDKA) is disordered.

The protein belongs to the class-II aminoacyl-tRNA synthetase family. It depends on Zn(2+) as a cofactor.

Its subcellular location is the cytoplasm. The enzyme catalyses tRNA(Ala) + L-alanine + ATP = L-alanyl-tRNA(Ala) + AMP + diphosphate. Catalyzes the attachment of alanine to tRNA(Ala) in a two-step reaction: alanine is first activated by ATP to form Ala-AMP and then transferred to the acceptor end of tRNA(Ala). Also edits incorrectly charged Ser-tRNA(Ala) and Gly-tRNA(Ala) via its editing domain. The sequence is that of Alanine--tRNA ligase from Rhizorhabdus wittichii (strain DSM 6014 / CCUG 31198 / JCM 15750 / NBRC 105917 / EY 4224 / RW1) (Sphingomonas wittichii).